We begin with the raw amino-acid sequence, 161 residues long: 2-C-methyl-D-erythritol 2,4-cyclodiphosphate synthase (161 aa).

Asp-10 and His-12 together coordinate a divalent metal cation. 4-CDP-2-C-methyl-D-erythritol 2-phosphate-binding positions include 10–12 (DVH) and 36–37 (HS). His-44 contacts a divalent metal cation. 4-CDP-2-C-methyl-D-erythritol 2-phosphate is bound by residues 58-60 (DIG), 63-67 (FPDTD), 102-108 (AQAPKML), 134-137 (TTTE), Phe-141, and Arg-144.

This sequence belongs to the IspF family. In terms of assembly, homotrimer. A divalent metal cation serves as cofactor.

The catalysed reaction is 4-CDP-2-C-methyl-D-erythritol 2-phosphate = 2-C-methyl-D-erythritol 2,4-cyclic diphosphate + CMP. It functions in the pathway isoprenoid biosynthesis; isopentenyl diphosphate biosynthesis via DXP pathway; isopentenyl diphosphate from 1-deoxy-D-xylulose 5-phosphate: step 4/6. Involved in the biosynthesis of isopentenyl diphosphate (IPP) and dimethylallyl diphosphate (DMAPP), two major building blocks of isoprenoid compounds. Catalyzes the conversion of 4-diphosphocytidyl-2-C-methyl-D-erythritol 2-phosphate (CDP-ME2P) to 2-C-methyl-D-erythritol 2,4-cyclodiphosphate (ME-CPP) with a corresponding release of cytidine 5-monophosphate (CMP). This is 2-C-methyl-D-erythritol 2,4-cyclodiphosphate synthase from Shewanella loihica (strain ATCC BAA-1088 / PV-4).